Reading from the N-terminus, the 106-residue chain is Met repressor (106 aa).

Belongs to the MetJ family. In terms of assembly, homodimer.

The protein resides in the cytoplasm. Its function is as follows. This regulatory protein, when combined with SAM (S-adenosylmethionine) represses the expression of the methionine regulon and of enzymes involved in SAM synthesis. In Vibrio campbellii (strain ATCC BAA-1116), this protein is Met repressor.